We begin with the raw amino-acid sequence, 151 residues long: Probable cGMP 3',5'-cyclic phosphodiesterase subunit delta (151 aa).

It belongs to the PDE6D/unc-119 family. Interacts with Pde6.

It is found in the nucleus. It localises to the cytoplasm. The chain is Probable cGMP 3',5'-cyclic phosphodiesterase subunit delta from Drosophila willistoni (Fruit fly).